Reading from the N-terminus, the 427-residue chain is Probable transcription factor At5g28040 (427 aa).

Residues 1 to 81 are disordered; sequence MASDQRDTDF…APATKSSSGT (81 aa). The residue at position 14 (Ser-14) is a Phosphoserine. The segment covering 22-32 has biased composition (gly residues); sequence GGGGGGRGGGE. Residues 33–62 are compositionally biased toward acidic residues; the sequence is TESDEDVVIPEPNEAEDDDHDPDPDPEYED.

This sequence belongs to the GeBP family.

In Arabidopsis thaliana (Mouse-ear cress), this protein is Probable transcription factor At5g28040.